A 265-amino-acid polypeptide reads, in one-letter code: MKRIFVQNRELVVPGTLLAQGPYKNGRGTFREGSRIYSTVIGLVDIKGNTIRVIPLEGPYIPEVGDNVIGKIVDVKFSSWVVDIGAPYPANLKIQDFTDEKIDLLRTDLRKFFDIGDIIYAKVKAITEVNNIDLTTKGMPFNGGPLKGGQIVKITPSRVPRVIGRGGSMINMIKKLTMTRIIVGQNGWIWVSGKNDALEKLAIEAILKIDKESHTRGLTDRIKALLLSRLQELKEKGVIEEIPKLEEEPQGEDEVNGNDGEARGA.

An S1 motif domain is found at G65–K137. Residues K147–A205 enclose the KH domain. The segment at E241–A265 is disordered.

It belongs to the RRP4 family. As to quaternary structure, component of the archaeal exosome complex. Forms a trimer of Rrp4 and/or Csl4 subunits. The trimer associates with a hexameric ring-like arrangement composed of 3 Rrp41-Rrp42 heterodimers.

The protein resides in the cytoplasm. In terms of biological role, non-catalytic component of the exosome, which is a complex involved in RNA degradation. Increases the RNA binding and the efficiency of RNA degradation. Confers strong poly(A) specificity to the exosome. In Pyrococcus abyssi (strain GE5 / Orsay), this protein is Exosome complex component Rrp4.